The following is a 54-amino-acid chain: Lectin alpha chain (54 aa).

Belongs to the leguminous lectin family. Tetramer of two alpha and two beta chains.

This is Lectin alpha chain from Lathyrus tingitanus (Tangier pea).